We begin with the raw amino-acid sequence, 81 residues long: Small ribosomal subunit protein bS18 (81 aa).

This sequence belongs to the bacterial ribosomal protein bS18 family. Part of the 30S ribosomal subunit. Forms a tight heterodimer with protein bS6.

In terms of biological role, binds as a heterodimer with protein bS6 to the central domain of the 16S rRNA, where it helps stabilize the platform of the 30S subunit. The sequence is that of Small ribosomal subunit protein bS18 from Chlamydia trachomatis serovar L2 (strain ATCC VR-902B / DSM 19102 / 434/Bu).